The following is a 201-amino-acid chain: Large ribosomal subunit protein uL4 (201 aa).

The tract at residues 44–68 is disordered; it reads RAQKSRAEVSGSGRKPWRQKGTGRA.

Belongs to the universal ribosomal protein uL4 family. In terms of assembly, part of the 50S ribosomal subunit.

Its function is as follows. One of the primary rRNA binding proteins, this protein initially binds near the 5'-end of the 23S rRNA. It is important during the early stages of 50S assembly. It makes multiple contacts with different domains of the 23S rRNA in the assembled 50S subunit and ribosome. In terms of biological role, forms part of the polypeptide exit tunnel. The sequence is that of Large ribosomal subunit protein uL4 from Buchnera aphidicola subsp. Acyrthosiphon pisum (strain APS) (Acyrthosiphon pisum symbiotic bacterium).